The primary structure comprises 607 residues: LRR receptor kinase SERK2 (607 aa).

A signal peptide spans 1-21 (MRELRVAVLIIAVSLPSFSAS). Over 22-219 (DRQGDALYDM…QSGSHSSKIG (198 aa)) the chain is Extracellular. N-linked (GlcNAc...) asparagine glycans are attached at residues Asn36 and Asn110. 4 LRR repeats span residues 87 to 110 (LKYL…QFGN), 111 to 135 (LSSL…LGQL), 136 to 159 (SKLQ…LAKI), and 160 to 183 (SSLT…LFQV). Residues Asn149, Asn171, Asn187, and Asn206 are each glycosylated (N-linked (GlcNAc...) asparagine). Residues 220 to 240 (IVLGTVGGVIGLLIVAALFLF) traverse the membrane as a helical segment. Topologically, residues 241-607 (CKGRRKSHLR…QEAIELSGGR (367 aa)) are cytoplasmic. Positions 284-563 (FSERNVLGQG…VVRMLEGEGL (280 aa)) constitute a Protein kinase domain. ATP contacts are provided by residues 290-298 (LGQGGFGKV) and Lys312. The Proton acceptor role is filled by Asp411.

This sequence belongs to the protein kinase superfamily. Ser/Thr protein kinase family.

Its subcellular location is the cell membrane. It catalyses the reaction L-seryl-[protein] + ATP = O-phospho-L-seryl-[protein] + ADP + H(+). It carries out the reaction L-threonyl-[protein] + ATP = O-phospho-L-threonyl-[protein] + ADP + H(+). May be involved in the regulation of plant growth through the brassinosteroid (BR) signaling pathway. This chain is LRR receptor kinase SERK2, found in Oryza sativa subsp. japonica (Rice).